Here is a 238-residue protein sequence, read N- to C-terminus: Tyrosine recombinase XerD-like (238 aa).

A Core-binding (CB) domain is found at 1–75 (MKLPNEIDEY…SANQYLLFLY (75 aa)). Positions 90–238 (VQKKSQTAQS…TITTLEKYYR (149 aa)) constitute a Tyr recombinase domain. Active-site residues include lysine 154 and arginine 204. Residue tyrosine 236 is the O-(3'-phospho-DNA)-tyrosine intermediate of the active site.

This sequence belongs to the 'phage' integrase family. XerD-like subfamily.

Its subcellular location is the cytoplasm. Its function is as follows. Putative tyrosine recombinase. Not involved in the cutting and rejoining of the recombining DNA molecules on dif(SL) site. The protein is Tyrosine recombinase XerD-like (ynbA) of Lactococcus lactis subsp. lactis (strain IL1403) (Streptococcus lactis).